A 457-amino-acid polypeptide reads, in one-letter code: Multidrug resistance protein MdtK (457 aa).

The next 12 membrane-spanning stretches (helical) occupy residues L11–V31, I53–A73, W93–I113, A127–A147, G160–Y180, L188–M208, L243–V263, I276–T296, A314–V334, V350–I370, I387–A407, and P418–L438.

It belongs to the multi antimicrobial extrusion (MATE) (TC 2.A.66.1) family. MdtK subfamily.

It is found in the cell inner membrane. Functionally, multidrug efflux pump that functions probably as a Na(+)/drug antiporter. In Salmonella heidelberg (strain SL476), this protein is Multidrug resistance protein MdtK.